A 297-amino-acid polypeptide reads, in one-letter code: Glycosylphosphatidylinositol anchor biosynthesis protein 11 (297 aa).

Residues 1–18 (MTSASPSPLRAANAASSA) show a composition bias toward low complexity. Residues 1–26 (MTSASPSPLRAANAASSAPVPPPAMK) form a disordered region. The next 2 membrane-spanning stretches (helical) occupy residues 44-64 (SFVHPAALLAILATRFQALVA) and 76-96 (FLALLQVTYVMVCLPPAGSVL). Residues 97–140 (PSPPASPVSDGDEKEKEKEKEKEKEKEKRKLPLRAGKLPRKKNQ) form a disordered region. Residues 107-126 (GDEKEKEKEKEKEKEKEKRK) are compositionally biased toward basic and acidic residues. Over residues 127-140 (LPLRAGKLPRKKNQ) the composition is skewed to basic residues. An N-linked (GlcNAc...) asparagine glycan is attached at asparagine 139. 4 helical membrane passes run 157 to 177 (LILTFLLATPVLSLLLVLFGA), 187 to 207 (VLCAAHMALLASTALIYVHGV), 225 to 245 (VWGGALGTALGAWFGAVPIPL), and 253 to 273 (AFPITILTGAYFGFAVGSVVC).

This sequence belongs to the PIGF family.

The protein resides in the endoplasmic reticulum membrane. It participates in glycolipid biosynthesis; glycosylphosphatidylinositol-anchor biosynthesis. In terms of biological role, acts in the GPI biosynthetic pathway between GlcNAc-PI synthesis and GPI transfer to protein. This Aspergillus fumigatus (strain ATCC MYA-4609 / CBS 101355 / FGSC A1100 / Af293) (Neosartorya fumigata) protein is Glycosylphosphatidylinositol anchor biosynthesis protein 11 (gpi11).